The following is a 266-amino-acid chain: MRLIPLVTAEQVGKWAARHIVNRINAFKPTADRPFVLGLPTGGTPLTAYKALVEMHKAGQVSFKHVVTFNMDEYVGLPKEHPESYHSFMHRNFFDHVDIPAENINLLNGNAPDIDAECRRYEEKIRSYGKIHLFMGGVGNDGHIAFNEPASSLASRTRIKTLTHETRVANSRFFDGDVDLVPKYALTVGVGTLLDAEEVMILVLGHQKALALQAAVEGNVNHMWTITCLQLHPKAVIVCDEPSTMELKVKTLKYFNELEAENIKGL.

Residue Asp72 is the Proton acceptor; for enolization step of the active site. Asp141 (for ring-opening step) is an active-site residue. The active-site Proton acceptor; for ring-opening step is the His143. Glu148 functions as the For ring-opening step in the catalytic mechanism.

It belongs to the glucosamine/galactosamine-6-phosphate isomerase family. NagB subfamily. In terms of assembly, homohexamer.

It catalyses the reaction alpha-D-glucosamine 6-phosphate + H2O = beta-D-fructose 6-phosphate + NH4(+). It participates in amino-sugar metabolism; N-acetylneuraminate degradation; D-fructose 6-phosphate from N-acetylneuraminate: step 5/5. Allosterically activated by N-acetylglucosamine 6-phosphate (GlcNAc6P). In terms of biological role, catalyzes the reversible isomerization-deamination of glucosamine 6-phosphate (GlcN6P) to form fructose 6-phosphate (Fru6P) and ammonium ion. In Klebsiella pneumoniae subsp. pneumoniae (strain ATCC 700721 / MGH 78578), this protein is Glucosamine-6-phosphate deaminase.